Consider the following 299-residue polypeptide: Deoxyhypusine hydroxylase (299 aa).

HEAT-like PBS-type repeat units lie at residues 54–80 (LKHE…VLQD), 87–113 (VRHE…YSED), 174–200 (DRYR…GLRA), 205–231 (FRHE…ALRS), and 238–264 (VRHE…FAQD). Positions 56, 89, and 90 each coordinate Fe cation. Fe cation is bound by residues histidine 207, histidine 240, and glutamate 241.

This sequence belongs to the deoxyhypusine hydroxylase family. Requires Fe(2+) as cofactor.

The catalysed reaction is [eIF5A protein]-deoxyhypusine + AH2 + O2 = [eIF5A protein]-hypusine + A + H2O. It participates in protein modification; eIF5A hypusination. Catalyzes the hydroxylation of the N(6)-(4-aminobutyl)-L-lysine intermediate produced by deoxyhypusine synthase/DHPS on a critical lysine of the eukaryotic translation initiation factor 5A/eIF-5A. This is the second step of the post-translational modification of that lysine into an unusual amino acid residue named hypusine. Hypusination is unique to mature eIF-5A factor and is essential for its function. The polypeptide is Deoxyhypusine hydroxylase (Gallus gallus (Chicken)).